The chain runs to 855 residues: Pre-mRNA-splicing factor SYF1 (855 aa).

HAT repeat units follow at residues 15–47 (LVFEEEDLPYEEEIMRNQFSVKCWLRYIEFKQG), 48–80 (APKPRLNQLYERALKLLPCSYKLWYRYLKARRA), 90–122 (PAYEDVNNCHERAFVFMHKMPRLWLDYCQFLMD), 124–158 (GRVTHTRRTFDRALRALPITQHSRIWPLYLRFLRS), 160–192 (PLPETAVRGYRRFLKLSPESAEEYIEYLKSSDR), 198–230 (QRLATVVNDERFVSKAGKSNYQLWHELCDLISQ), 235–268 (VQSLNVDAIIRGGLTRFTDQLGKLWCSLADYYIR), 270–305 (GHFEKARDVYEEAIRTVMTVRDFTQVFDSYAQFEES), and 369–407 (GRPREIINTYTEAVQTVDPFKATGKPHTLWVAFAKFYED). Lys420 carries the N6-acetyllysine modification. HAT repeat units follow at residues 498–530 (GTFQSTKAVYDRILDLRIATPQIVINYAMFLEE), 532–566 (KYFEESFKAYERGISLFKWPNVSDIWSTYLTKFIS), 571–605 (RKLERARDLFEQALDGCPPKYAKTLYLLYAQLEEE), 643–677 (YGVTHTRGIYQKAIEVLSDEHAREMCLRFADMECK), and 679–713 (GEIDRARAIYSFCSQICDPRTTGAFWQTWKDFEVR). Residues 808–855 (AELAQQANPEEIQLGEDEDEDEMDLEPNEVRLEQQSVPAAVFGSLKED) are disordered. Positions 820 to 834 (QLGEDEDEDEMDLEP) are enriched in acidic residues. Ser851 bears the Phosphoserine mark.

Belongs to the crooked-neck family. In terms of assembly, associates with RNA polymerase II, the TCR-specific proteins CKN1/CSA and ERCC6/CSB, and XPA. Identified in the spliceosome C complex. Component of the XAB2 complex, a multimeric protein complex composed of XAB2, PRPF19, AQR, ZNF830, ISY1, and PPIE. Identified in a pentameric intron-binding (IB) complex composed of AQR, XAB2, ISY1, ZNF830 and PPIE that is incorporated into the spliceosome as a preassembled complex. The IB complex does not contain PRPF19.

It is found in the nucleus. Functionally, involved in pre-mRNA splicing as component of the spliceosome. Involved in transcription-coupled repair (TCR), transcription and pre-mRNA splicing. This chain is Pre-mRNA-splicing factor SYF1 (Xab2), found in Rattus norvegicus (Rat).